Reading from the N-terminus, the 104-residue chain is MGDVMIQSVKTESGLVEGHRGICDSLGRVVGALAKVAKLVVALAALVLNGALCVLSLVALCVGATPVGPLAVLVATTLASFLCAACVLFIAAKDRGWIASTNKC.

2 helical membrane-spanning segments follow: residues 39–59 (LVVALAALVLNGALCVLSLVA) and 70–90 (LAVLVATTLASFLCAACVLFI).

The protein localises to the secreted. The protein resides in the host vacuole. Its subcellular location is the host pathogen-containing vacuole. It localises to the host pathogen-containing vacuole membrane. Functionally, inclusion membrane protein probably involved in early modification events of the chlamydial inclusion. The polypeptide is Inclusion membrane protein F (incF) (Chlamydia trachomatis serovar D (strain ATCC VR-885 / DSM 19411 / UW-3/Cx)).